Consider the following 230-residue polypeptide: Ribose-5-phosphate isomerase A (230 aa).

Substrate-binding positions include T32–T35, D85–D88, and K98–G101. The active-site Proton acceptor is E107. Residue K125 participates in substrate binding.

It belongs to the ribose 5-phosphate isomerase family. Homodimer.

It catalyses the reaction aldehydo-D-ribose 5-phosphate = D-ribulose 5-phosphate. It participates in carbohydrate degradation; pentose phosphate pathway; D-ribose 5-phosphate from D-ribulose 5-phosphate (non-oxidative stage): step 1/1. Its function is as follows. Catalyzes the reversible conversion of ribose-5-phosphate to ribulose 5-phosphate. In Burkholderia vietnamiensis (strain G4 / LMG 22486) (Burkholderia cepacia (strain R1808)), this protein is Ribose-5-phosphate isomerase A.